A 206-amino-acid chain; its full sequence is Outer-membrane lipoprotein LolB (206 aa).

An N-terminal signal peptide occupies residues 1–18 (MSLLKNLLAPCLALLLAG). A lipid anchor (N-palmitoyl cysteine) is attached at Cys19. A lipid anchor (S-diacylglycerol cysteine) is attached at Cys19.

It belongs to the LolB family. In terms of assembly, monomer.

The protein resides in the cell outer membrane. Functionally, plays a critical role in the incorporation of lipoproteins in the outer membrane after they are released by the LolA protein. This is Outer-membrane lipoprotein LolB from Stutzerimonas stutzeri (strain A1501) (Pseudomonas stutzeri).